A 342-amino-acid chain; its full sequence is Flotillin-like protein FloA (342 aa).

The next 2 membrane-spanning stretches (helical) occupy residues 18–38 (FFIF…GKFI) and 39–59 (SLWF…IIGM).

The protein belongs to the flotillin-like FloA family. Homooligomerizes.

It localises to the cell membrane. Its subcellular location is the membrane raft. Its function is as follows. Found in functional membrane microdomains (FMM) that may be equivalent to eukaryotic membrane rafts. FMMs are highly dynamic and increase in number as cells age. Flotillins are thought to be important factors in membrane fluidity. The chain is Flotillin-like protein FloA from Protochlamydia amoebophila (strain UWE25).